Reading from the N-terminus, the 219-residue chain is Outer spore wall protein 4 (219 aa).

The N-terminal stretch at 1–19 (MRFQLFIYFYFTIVVIAGT) is a signal peptide. Topologically, residues 20–170 (NTIQQFSDAG…KKKRLDRIKR (151 aa)) are extracellular. N-linked (GlcNAc...) asparagine glycans are attached at residues Asn-42, Asn-62, and Asn-136. A helical transmembrane segment spans residues 171–191 (ILTVSLLELGLAQGVADLCAV). Residues 192 to 193 (AP) are Cytoplasmic-facing. A helical transmembrane segment spans residues 194-214 (FACLLGVTVGSIGFIFWLALI). Over 215 to 219 (YNAIQ) the chain is Extracellular.

It belongs to the OSW4/6 family. Post-translationally, N-glycosylated.

It localises to the membrane. In terms of biological role, involved in spore wall assembly. May be involved in maintaining genome integrity. This is Outer spore wall protein 4 from Saccharomyces cerevisiae (strain ATCC 204508 / S288c) (Baker's yeast).